The chain runs to 389 residues: Indole-3-acetate monooxygenase (389 aa).

Belongs to the HpaH/HsaA monooxygenase family.

It catalyses the reaction (indol-3-yl)acetate + NADH + O2 + H(+) = 2-hydroxy-(1H-indol-3-yl)acetate + NAD(+) + H2O. The enzyme catalyses indole + NADH + O2 + H(+) = indoxyl + NAD(+) + H2O. In terms of biological role, involved in the degradation of the plant hormone indole-3-acetic acid (IAA). Catalyzes the first step of the pathway, the conversion of IAA to 2-hydroxy-IAA (2-OH-IAA). Can also convert indole to indoxyl, which spontaneously dimerizes in the presence of oxygen to form the blue pigment indigo. The polypeptide is Indole-3-acetate monooxygenase (Acinetobacter baumannii (strain ATCC 19606 / DSM 30007 / JCM 6841 / CCUG 19606 / CIP 70.34 / NBRC 109757 / NCIMB 12457 / NCTC 12156 / 81)).